Here is a 187-residue protein sequence, read N- to C-terminus: Ribonuclease HII (187 aa).

In terms of domain architecture, RNase H type-2 spans 1–187 (MICGTDEAGR…NPVKRLLANL (187 aa)). Positions 6, 7, and 98 each coordinate a divalent metal cation.

The protein belongs to the RNase HII family. Requires Mn(2+) as cofactor. Mg(2+) serves as cofactor.

It is found in the cytoplasm. It carries out the reaction Endonucleolytic cleavage to 5'-phosphomonoester.. Functionally, endonuclease that specifically degrades the RNA of RNA-DNA hybrids. In Idiomarina loihiensis (strain ATCC BAA-735 / DSM 15497 / L2-TR), this protein is Ribonuclease HII.